The primary structure comprises 81 residues: uncharacterized protein (81 aa).

This is an uncharacterized protein from Vaccinia virus (strain Copenhagen) (VACV).